A 441-amino-acid polypeptide reads, in one-letter code: Xaa-Pro aminopeptidase (441 aa).

Mn(2+) is bound by residues Asp261, Asp272, His355, Glu384, and Glu407.

This sequence belongs to the peptidase M24B family. As to quaternary structure, homotetramer. Mn(2+) is required as a cofactor.

The protein resides in the cytoplasm. It carries out the reaction Release of any N-terminal amino acid, including proline, that is linked to proline, even from a dipeptide or tripeptide.. This Escherichia coli (strain K12) protein is Xaa-Pro aminopeptidase (pepP).